The sequence spans 148 residues: 3-dehydroquinate dehydratase (148 aa).

The active-site Proton acceptor is Y23. Positions 75, 81, and 88 each coordinate substrate. The Proton donor role is filled by H101. Substrate is bound by residues 102–103 (LS) and R112.

The protein belongs to the type-II 3-dehydroquinase family. Homododecamer.

It catalyses the reaction 3-dehydroquinate = 3-dehydroshikimate + H2O. It functions in the pathway metabolic intermediate biosynthesis; chorismate biosynthesis; chorismate from D-erythrose 4-phosphate and phosphoenolpyruvate: step 3/7. Functionally, catalyzes a trans-dehydration via an enolate intermediate. The chain is 3-dehydroquinate dehydratase from Xanthomonas oryzae pv. oryzae (strain MAFF 311018).